Here is a 370-residue protein sequence, read N- to C-terminus: Maturase K (370 aa).

It belongs to the intron maturase 2 family. MatK subfamily.

Its subcellular location is the plastid. The protein localises to the chloroplast. Usually encoded in the trnK tRNA gene intron. Probably assists in splicing its own and other chloroplast group II introns. This chain is Maturase K, found in Marchantia polymorpha (Common liverwort).